A 218-amino-acid chain; its full sequence is GILT-like protein ZK669.3 (218 aa).

Residues 1–21 (MRRLNGVFICLILFITKISYA) form the signal peptide. Residues N129 and N185 are each glycosylated (N-linked (GlcNAc...) asparagine).

Belongs to the GILT family.

It is found in the secreted. This Caenorhabditis elegans protein is GILT-like protein ZK669.3.